We begin with the raw amino-acid sequence, 365 residues long: Chorismate synthase (365 aa).

R46 is a binding site for NADP(+). FMN contacts are provided by residues 124-126 (RAS), G284, 299-303 (KPTPS), and R326.

Belongs to the chorismate synthase family. FMNH2 is required as a cofactor.

The enzyme catalyses 5-O-(1-carboxyvinyl)-3-phosphoshikimate = chorismate + phosphate. It functions in the pathway metabolic intermediate biosynthesis; chorismate biosynthesis; chorismate from D-erythrose 4-phosphate and phosphoenolpyruvate: step 7/7. Its function is as follows. Catalyzes the anti-1,4-elimination of the C-3 phosphate and the C-6 proR hydrogen from 5-enolpyruvylshikimate-3-phosphate (EPSP) to yield chorismate, which is the branch point compound that serves as the starting substrate for the three terminal pathways of aromatic amino acid biosynthesis. This reaction introduces a second double bond into the aromatic ring system. The chain is Chorismate synthase from Pyrobaculum neutrophilum (strain DSM 2338 / JCM 9278 / NBRC 100436 / V24Sta) (Thermoproteus neutrophilus).